Here is a 1822-residue protein sequence, read N- to C-terminus: CDK5 regulatory subunit-associated protein 2 (1822 aa).

The tract at residues 50–93 (KVSPTRARNMKDFENQITELKKENFNLKLRIYFLEERIQQEFAG) is CM1 motif; interacts with the gTuRC. The tract at residues 57–195 (RNMKDFENQI…TEKALRLSLE (139 aa)) is interaction with NCKAP5L. Ser485 and Ser544 each carry phosphoserine. The tract at residues 1022–1046 (FQDNPGEQEGPETTQSAGRDKDMDS) is disordered. At Thr1195 the chain carries Phosphothreonine. Positions 1201-1822 (GKMLESLKQQ…GASSPSRPGS (622 aa)) are interaction with PCNT and AKAP9. Residues Ser1243 and Ser1245 each carry the phosphoserine modification. Residues 1350–1391 (YHHLLPESPEPSASHALSDDEMSEKSFLSRDPKPDSDTEKYP) are disordered. Residues 1372–1389 (SEKSFLSRDPKPDSDTEK) are compositionally biased toward basic and acidic residues. Ser1497, Ser1592, and Ser1595 each carry phosphoserine. Residues 1655 to 1697 (HMLGLIEDYDALYKQISWGQTLLAKMDVQTQEALSPTSHKLGP) are interaction with CDK5R1. Residues 1655–1822 (HMLGLIEDYD…GASSPSRPGS (168 aa)) form a required for centrosomal attachment, Golgi targeting and CALM1 interaction region. The segment at 1688–1822 (LSPTSHKLGP…GASSPSRPGS (135 aa)) is interaction with PCNT. Positions 1790–1799 (VITHQVLRKA) are required for centrosomal attachment, Golgi localization and CALM1 interaction. The residue at position 1822 (Ser1822) is a Phosphoserine.

In terms of assembly, homodimer. Interacts with CDK5R1 (p35 form). CDK5RAP1, CDK5RAP2 and CDK5RAP3 show competitive binding to CDK5R1. May form a complex with CDK5R1 and CDK5. Interacts with pericentrin/PCNT; the interaction is leading to centrosomal and Golgi localization of CDK5RAP2 and PCNT. Interacts with AKAP9; the interaction targets CDK5RAP2 and AKAP9 to Golgi apparatus. Interacts with TUBG1; the interaction is leading to the centrosomal localization of CDK5RAP2 and TUBG1. Interacts with TUBGCP3. Interacts with CALM1. Interacts with CDC20. Interacts with CEP68; degradation of CEP68 in early mitosis leads to removal of CDK5RAP2 from the centrosome which promotes centriole disengagement and subsequent centriole separation. Interacts with NCKAP5L. Interacts with LGALS3BP; this interaction may connect the pericentrosomal complex to the gamma-tubulin ring complex (gTuRC) to promote microtubule assembly and acetylation. Contrary to human, chimpanzee, bovine and dog orthologous proteins, does not interact with EB1/MAPRE1, possibly due to a divergence at the level of the critical residue 939, which is a proline in MAPRE1-binding orthologs and a leucine in mouse and rat. Interacts with CCDC66. Associates (via CM1 motif) with TUBGCP2 of the gTuRC; the interaction plays a role in gTuRC activation. Phosphorylated in vitro by CDK5. In terms of tissue distribution, expressed in testis, thymus, heart and brain.

The protein localises to the cytoplasm. Its subcellular location is the cytoskeleton. The protein resides in the microtubule organizing center. It is found in the centrosome. It localises to the golgi apparatus. Functionally, potential regulator of CDK5 activity via its interaction with CDK5R1. Negative regulator of centriole disengagement (licensing) which maintains centriole engagement and cohesion. Involved in regulation of mitotic spindle orientation. Plays a role in the spindle checkpoint activation by acting as a transcriptional regulator of both BUBR1 and MAD2 promoter. Together with EB1/MAPRE1, may promote microtubule polymerization, bundle formation, growth and dynamics at the plus ends. Regulates centrosomal maturation by recruitment of the gamma-tubulin ring complex (gTuRC) onto centrosomes. Required for the recruitment of AKAP9 to centrosomes. Plays a role in neurogenesis. Contrary to higher mammalian orthologs, including human, chimpanzee, bovine and dog, does not interact with EB1/MAPRE1, therefore its function in the regulation of microtubule dynamics is unclear. This chain is CDK5 regulatory subunit-associated protein 2 (Cdk5rap2), found in Mus musculus (Mouse).